The sequence spans 443 residues: MSTSDSIVSSQTKQSSWRKSDTTWTLGLFGTAIGAGVLFFPIRAGFGGLIPILLMLVLAYPIAFYCHRALARLCLSGSNPSGNITETVEEHFGKTGGVVITFLYFFAICPLLWIYGVTITNTFMTFWENQLGFAPLNRGFVALFLLLLMAFVIWFGKDLMVKVMSYLVWPFIASLVLISLSLIPYWNSAVIDQVDLGSLSLTGHDGILITVWLGISIMVFSFNFSPIVSSFVVSKREEYEKDFGRDFTERKCSQIISRASMLMVAVVMFFAFSCLFTLSPANMAEAKAQNIPVLSYLANHFASMTGTKTTFAITLEYAASIIALVAIFKSFFGHYLGTLEGLNGLILKFGYKGDKTKVSLGKLNTISMIFIMGSTWVVAYANPNILDLIEAMGAPIIASLLCLLPMYAIRKAPSLAKYRGRLDNVFVTVIGLLTILNIVYKLF.

11 helical membrane passes run 22–42 (TTWT…FFPI), 44–64 (AGFG…PIAF), 97–117 (GVVI…IYGV), 140–160 (FVAL…KDLM), 163–183 (VMSY…LSLI), 207–227 (ILIT…FSPI), 261–281 (MLMV…LSPA), 311–331 (FAIT…FKSF), 366–386 (ISMI…PNIL), 389–409 (IEAM…MYAI), and 423–443 (DNVF…YKLF).

The protein belongs to the amino acid/polyamine transporter 2 family. SdaC/TdcC subfamily.

The protein resides in the cell inner membrane. The enzyme catalyses L-threonine(in) + H(+)(in) = L-threonine(out) + H(+)(out). It carries out the reaction L-serine(in) + H(+)(in) = L-serine(out) + H(+)(out). Its function is as follows. Involved in the import of threonine and serine into the cell, with the concomitant import of a proton (symport system). This is Threonine/serine transporter TdcC from Shigella boydii serotype 18 (strain CDC 3083-94 / BS512).